Reading from the N-terminus, the 622-residue chain is Cytochrome c oxidase subunit 1 (622 aa).

Over methionine 1–isoleucine 27 the chain is Extracellular. Residues alanine 28–alanine 46 traverse the membrane as a helical segment. Residues methionine 47–glutamate 68 lie on the Cytoplasmic side of the membrane. Residues valine 69 to alanine 88 form a helical membrane-spanning segment. Histidine 73 is a Fe(II)-heme a binding site. The Extracellular portion of the chain corresponds to leucine 89–alanine 110. Residues leucine 111–phenylalanine 128 traverse the membrane as a helical segment. Residues leucine 129–leucine 159 are Cytoplasmic-facing. The chain crosses the membrane as a helical span at residues glutamine 160–isoleucine 178. The Extracellular portion of the chain corresponds to asparagine 179–threonine 196. A helical membrane pass occupies residues threonine 197–leucine 215. The Cytoplasmic segment spans residues alanine 216 to glutamate 241. Residues histidine 242–glycine 261 form a helical membrane-spanning segment. Residues histidine 249 and tyrosine 253 each coordinate Cu cation. The 1'-histidyl-3'-tyrosine (His-Tyr) cross-link spans histidine 249–tyrosine 253. At isoleucine 262–alanine 284 the chain is on the extracellular side. The chain crosses the membrane as a helical span at residues isoleucine 285–glycine 304. Residues histidine 298 and histidine 299 each coordinate Cu cation. Over leucine 305–isoleucine 312 the chain is Cytoplasmic. The chain crosses the membrane as a helical span at residues phenylalanine 313–tryptophan 331. At leucine 332–methionine 346 the chain is on the extracellular side. The helical transmembrane segment at leucine 347–leucine 366 threads the bilayer. The Cytoplasmic segment spans residues alanine 367 to glutamine 374. Residues phenylalanine 375–valine 394 form a helical membrane-spanning segment. Histidine 384 contributes to the heme a3 binding site. Position 386 (histidine 386) interacts with Fe(II)-heme a. At phenylalanine 395 to serine 421 the chain is on the extracellular side. A helical membrane pass occupies residues phenylalanine 422–leucine 441. Over methionine 442–threonine 459 the chain is Cytoplasmic. A helical transmembrane segment spans residues glycine 460–leucine 479. Residues valine 480 to asparagine 552 are Extracellular-facing. Residues glycine 553–leucine 572 form a helical membrane-spanning segment. At tyrosine 573–glycine 580 the chain is on the cytoplasmic side. A helical membrane pass occupies residues leucine 581–histidine 604. Over glycine 605–alanine 622 the chain is Cytoplasmic.

It belongs to the heme-copper respiratory oxidase family. Cu(2+) is required as a cofactor. It depends on heme as a cofactor.

The protein resides in the cell membrane. The catalysed reaction is 4 Fe(II)-[cytochrome c] + O2 + 8 H(+)(in) = 4 Fe(III)-[cytochrome c] + 2 H2O + 4 H(+)(out). The protein operates within energy metabolism; oxidative phosphorylation. In terms of biological role, cytochrome c oxidase is the component of the respiratory chain that catalyzes the reduction of oxygen to water. Subunits 1-3 form the functional core of the enzyme complex. Co I is the catalytic subunit of the enzyme. Electrons originating in cytochrome c are transferred via the copper A center of subunit 2 and heme a of subunit 1 to the bimetallic center formed by heme a3 and copper B. This cytochrome c oxidase shows proton pump activity across the membrane in addition to the electron transfer. The sequence is that of Cytochrome c oxidase subunit 1 (ctaD) from Bacillus subtilis (strain 168).